An 807-amino-acid polypeptide reads, in one-letter code: Carbamoyltransferase HypF2 (807 aa).

Positions 14–101 (RIRIRVRGVV…VDADGFAILE (88 aa)) constitute an Acylphosphatase-like domain. C4-type zinc fingers lie at residues 120–145 (CPDC…CTQC) and 170–195 (CRPC…CPDC). The YrdC-like domain occupies 212–415 (VDPIAETVAR…HVQFIRRARG (204 aa)). The segment at 663–682 (WGEQPSPGRPKTVAHSLGGV) is disordered.

The protein belongs to the carbamoyltransferase HypF family.

The catalysed reaction is C-terminal L-cysteinyl-[HypE protein] + carbamoyl phosphate + ATP + H2O = C-terminal S-carboxamide-L-cysteinyl-[HypE protein] + AMP + phosphate + diphosphate + H(+). Its pathway is protein modification; [NiFe] hydrogenase maturation. Involved in the maturation of [NiFe] hydrogenases. Along with HypE, it catalyzes the synthesis of the CN ligands of the active site iron of [NiFe]-hydrogenases. HypF functions as a carbamoyl transferase using carbamoylphosphate as a substrate and transferring the carboxamido moiety in an ATP-dependent reaction to the thiolate of the C-terminal cysteine of HypE yielding a protein-S-carboxamide. The sequence is that of Carbamoyltransferase HypF2 (hypF2) from Cupriavidus necator (strain ATCC 17699 / DSM 428 / KCTC 22496 / NCIMB 10442 / H16 / Stanier 337) (Ralstonia eutropha).